The sequence spans 374 residues: Layilin (374 aa).

The N-terminal stretch at 1-24 (MQPGPALQAVLLAVLLSEPRSSKG) is a signal peptide. The Extracellular segment spans residues 25–221 (RLLSGQLVCR…TKETFKESRE (197 aa)). The 141-residue stretch at 37 to 177 (TRRPCYKVIY…CNMKNNFICK (141 aa)) folds into the C-type lectin domain. Intrachain disulfides connect cysteine 63-cysteine 176 and cysteine 142-cysteine 168. N-linked (GlcNAc...) asparagine glycosylation occurs at asparagine 109. The segment at 184–212 (STTPSIRPGGEATEPPTPVLPEETQKEDT) is disordered. Residues 222–242 (AALNLAYILIPSIPLFLLLVV) form a helical membrane-spanning segment. The Cytoplasmic segment spans residues 243-374 (TSAACWVWIC…SGWVENEIYY (132 aa)). Serine 279 and serine 292 each carry phosphoserine. The tract at residues 323–367 (DYDNMAVNPSESGFVTLASMESGFVTNDIYEFSPDRMGRSKESGW) is interaction with NF2. The interaction with TLN1 stretch occupies residues 330 to 374 (NPSESGFVTLASMESGFVTNDIYEFSPDRMGRSKESGWVENEIYY). 5 consecutive repeat copies span residues 333–337 (ESGFV), 343–347 (ESGFV), 349–352 (NDIY), 364–368 (ESGWV), and 370–373 (NEIY). The 3 X 5 AA repeats of E-S-G-X-V stretch occupies residues 333–368 (ESGFVTLASMESGFVTNDIYEFSPDRMGRSKESGWV). Positions 349–373 (NDIYEFSPDRMGRSKESGWVENEIY) are 2 X 4 AA repeats of N-X-I-Y.

As to quaternary structure, interacts with NF2 and RDX. Interacts with TLN1. In terms of tissue distribution, widely expressed. Abundant in the ovary.

The protein localises to the membrane. Its function is as follows. Receptor for hyaluronate. This is Layilin (LAYN) from Cricetulus griseus (Chinese hamster).